A 505-amino-acid chain; its full sequence is Glucan endo-1,3-beta-glucosidase 2 (505 aa).

Residues 1 to 20 (MASLLHLLLLSLSLLVLASA) form the signal peptide. Asparagine 97 is a glycosylation site (N-linked (GlcNAc...) asparagine). Residue glutamate 125 is the Proton donor of the active site. Asparagine 180 and asparagine 262 each carry an N-linked (GlcNAc...) asparagine glycan. Glutamate 272 acts as the Nucleophile in catalysis. 3 N-linked (GlcNAc...) asparagine glycosylation sites follow: asparagine 304, asparagine 361, and asparagine 365. Cysteine 369 and cysteine 432 are joined by a disulfide. Asparagine 461, asparagine 466, and asparagine 473 each carry an N-linked (GlcNAc...) asparagine glycan. The GPI-anchor amidated serine moiety is linked to residue serine 477. The propeptide at 478–505 (SGIRSDLYYSRGIWSILTVMILNVANIL) is removed in mature form.

This sequence belongs to the glycosyl hydrolase 17 family. In terms of processing, contains two additional disulfide bonds.

The protein resides in the cell membrane. The enzyme catalyses Hydrolysis of (1-&gt;3)-beta-D-glucosidic linkages in (1-&gt;3)-beta-D-glucans.. This is Glucan endo-1,3-beta-glucosidase 2 from Arabidopsis thaliana (Mouse-ear cress).